Here is a 291-residue protein sequence, read N- to C-terminus: MQLKKAFWKLASLLPLSLLLFLGGCDKKLAVLNPQGPVAKAQYDLIVWSFLLMSLIIAIVFILFTVILIRYREKPENMDYEPPEQHGNTLLEIIWTLVPVIIVIALSIPTVKATYASEEVPKESKHIKPVEIYVTSANWKWLFSYPEEKIETVNYLNIPAGVPIQFKLTSVGPMNAFWVPELGGMKYTMDGMIMDLYLQADKPGSYLGRSANFSGEGFTHMEFEVEAKTKEKYDKWVKEVQETAPKLTEAKYNEIVKPGVVGRMTFSSHHLSYVDPKSLEYCDYNYYKNKK.

The first 28 residues, 1–28 (MQLKKAFWKLASLLPLSLLLFLGGCDKK), serve as a signal peptide directing secretion. 2 consecutive transmembrane segments (helical) span residues 49–69 (SFLL…VILI) and 91–111 (LEII…IPTV).

Belongs to the cytochrome c oxidase subunit 2 family.

It localises to the cell membrane. The enzyme catalyses 2 a quinol + O2 = 2 a quinone + 2 H2O. Its function is as follows. Catalyzes quinol oxidation with the concomitant reduction of oxygen to water. Subunit II transfers the electrons from a quinol to the binuclear center of the catalytic subunit I. The polypeptide is Quinol oxidase subunit 2 (Bacillus cereus (strain ATCC 14579 / DSM 31 / CCUG 7414 / JCM 2152 / NBRC 15305 / NCIMB 9373 / NCTC 2599 / NRRL B-3711)).